Here is a 493-residue protein sequence, read N- to C-terminus: Glutamyl-tRNA(Gln) amidotransferase subunit A (493 aa).

Residues Lys-78 and Ser-158 each act as charge relay system in the active site. The active-site Acyl-ester intermediate is the Ser-182.

This sequence belongs to the amidase family. GatA subfamily. In terms of assembly, heterotrimer of A, B and C subunits.

It carries out the reaction L-glutamyl-tRNA(Gln) + L-glutamine + ATP + H2O = L-glutaminyl-tRNA(Gln) + L-glutamate + ADP + phosphate + H(+). Functionally, allows the formation of correctly charged Gln-tRNA(Gln) through the transamidation of misacylated Glu-tRNA(Gln) in organisms which lack glutaminyl-tRNA synthetase. The reaction takes place in the presence of glutamine and ATP through an activated gamma-phospho-Glu-tRNA(Gln). This is Glutamyl-tRNA(Gln) amidotransferase subunit A from Rickettsia bellii (strain OSU 85-389).